Reading from the N-terminus, the 471-residue chain is Ubiquitin-conjugating enzyme E2 variant 3 (471 aa).

One can recognise a UEV domain in the interval 2–145; it reads EFDCEGLRRL…QEELPMYSLS (144 aa). 191 to 219 is an NAD(+) binding site; it reads GELGIACTLAISAKGIADRLVLLDLSEGT.

In the N-terminal section; belongs to the ubiquitin-conjugating enzyme family. UEV subfamily. The protein in the C-terminal section; belongs to the LDH/MDH superfamily. In terms of assembly, homodimer. In terms of tissue distribution, colon, colon carcinoma cell lines, normal cervical epithelium, carcinomas of the uterine cervix and peripheral blood leukocytes.

Possible negative regulator of polyubiquitination. The chain is Ubiquitin-conjugating enzyme E2 variant 3 from Homo sapiens (Human).